A 325-amino-acid chain; its full sequence is Leucine-rich repeat protein FLOR 1 (325 aa).

LRR repeat units lie at residues 65-88 (NRRVTGLSVTSGEVSGQISYQIGD), 89-114 (LVDLRTLDFSYLPHLTGNIPRTITKL), 115-140 (KNLNTLYLKHTSLSGPIPDYISELKS), 142-162 (TFLDLSFNQFTGPIPGSLSQM), 163-185 (PKLEAIQINDNKLTGSIPNSFGS), 187-211 (VGNVPNLYLSNNKLSGKIPESLSKY), 213-233 (FNAVDLSGNGFEGDAFMFFGR), 234-256 (NKTTVRVDLSRNMFNFDLVKVKF), 257-280 (ARSIVSLDLSQNHIYGKIPPALTK), and 281-305 (LHLEHFNVSDNHLCGKIPSGGLLQT).

The protein belongs to the polygalacturonase-inhibiting protein family. As to quaternary structure, interacts with MADS domain transcription factors during flower development. Component of a complex made of FLOR1, VSP1 and AGAMOUS (AG). Binds directly with AG. Confined to flowers and inflorescences (e.g. inflorescence meristems, floral meristems, stamens and carpels).

The protein resides in the cytoplasm. It localises to the nucleus. It is found in the perinuclear region. The protein localises to the cell membrane. Functionally, promotes flowering transition in long days (LD). The chain is Leucine-rich repeat protein FLOR 1 from Arabidopsis thaliana (Mouse-ear cress).